The sequence spans 344 residues: S-adenosylmethionine:tRNA ribosyltransferase-isomerase (344 aa).

This sequence belongs to the QueA family. In terms of assembly, monomer.

It is found in the cytoplasm. The catalysed reaction is 7-aminomethyl-7-carbaguanosine(34) in tRNA + S-adenosyl-L-methionine = epoxyqueuosine(34) in tRNA + adenine + L-methionine + 2 H(+). It participates in tRNA modification; tRNA-queuosine biosynthesis. Its function is as follows. Transfers and isomerizes the ribose moiety from AdoMet to the 7-aminomethyl group of 7-deazaguanine (preQ1-tRNA) to give epoxyqueuosine (oQ-tRNA). In Nitrosococcus oceani (strain ATCC 19707 / BCRC 17464 / JCM 30415 / NCIMB 11848 / C-107), this protein is S-adenosylmethionine:tRNA ribosyltransferase-isomerase.